Consider the following 100-residue polypeptide: MAKKSLIQREKKREKLKQKYQAFRKYLKEEMSQTLSIDKKWEIQKQLQSLPRNSTPTRIHRRCFLTGRPRANYRDFNLSRHILREMIHACLLPGVTKASW.

Belongs to the universal ribosomal protein uS14 family. Part of the 30S ribosomal subunit.

Its subcellular location is the plastid. It localises to the chloroplast. In terms of biological role, binds 16S rRNA, required for the assembly of 30S particles. The chain is Small ribosomal subunit protein uS14c from Anthoceros angustus (Hornwort).